Reading from the N-terminus, the 333-residue chain is 1D-myo-inositol 2-acetamido-2-deoxy-alpha-D-glucopyranoside deacetylase (333 aa).

Zn(2+) contacts are provided by histidine 18, aspartate 21, and histidine 165.

This sequence belongs to the MshB deacetylase family. Zn(2+) serves as cofactor.

It carries out the reaction 1D-myo-inositol 2-acetamido-2-deoxy-alpha-D-glucopyranoside + H2O = 1D-myo-inositol 2-amino-2-deoxy-alpha-D-glucopyranoside + acetate. In terms of biological role, catalyzes the deacetylation of 1D-myo-inositol 2-acetamido-2-deoxy-alpha-D-glucopyranoside (GlcNAc-Ins) in the mycothiol biosynthesis pathway. This is 1D-myo-inositol 2-acetamido-2-deoxy-alpha-D-glucopyranoside deacetylase from Corynebacterium jeikeium (strain K411).